A 377-amino-acid polypeptide reads, in one-letter code: tRNA-specific 2-thiouridylase MnmA (377 aa).

ATP-binding positions include 12–19 (GMSGGVDS) and Met-38. Residues 98–100 (NPD) are interaction with target base in tRNA. Catalysis depends on Cys-103, which acts as the Nucleophile. Cys-103 and Cys-200 form a disulfide bridge. Gly-127 is a binding site for ATP. Residues 150–152 (KDQ) form an interaction with tRNA region. Cys-200 (cysteine persulfide intermediate) is an active-site residue. The interval 314–315 (RY) is interaction with tRNA.

It belongs to the MnmA/TRMU family.

Its subcellular location is the cytoplasm. It catalyses the reaction S-sulfanyl-L-cysteinyl-[protein] + uridine(34) in tRNA + AH2 + ATP = 2-thiouridine(34) in tRNA + L-cysteinyl-[protein] + A + AMP + diphosphate + H(+). Functionally, catalyzes the 2-thiolation of uridine at the wobble position (U34) of tRNA, leading to the formation of s(2)U34. The sequence is that of tRNA-specific 2-thiouridylase MnmA from Limosilactobacillus reuteri (strain DSM 20016) (Lactobacillus reuteri).